We begin with the raw amino-acid sequence, 118 residues long: Large ribosomal subunit protein uL22c (118 aa).

Belongs to the universal ribosomal protein uL22 family. In terms of assembly, part of the 50S ribosomal subunit.

The protein localises to the plastid. The protein resides in the chloroplast. This protein binds specifically to 23S rRNA. In terms of biological role, the globular domain of the protein is located near the polypeptide exit tunnel on the outside of the subunit, while an extended beta-hairpin is found that lines the wall of the exit tunnel in the center of the 70S ribosome. This chain is Large ribosomal subunit protein uL22c (rpl22), found in Rhodomonas salina (Cryptomonas salina).